We begin with the raw amino-acid sequence, 391 residues long: MKFIDEALIRVEAGDGGNGCVSFRREKFIPKGGPDGGDGGDGGDVYLIADENLNTLIDYRFEKRFAAGRGENGRSAGCTGHRGSDITLRVPVGTRAIDNDTQEVIGDLTKHGMKMLVAKGGYHGLGNTRFKSSVNRAPRQKTNGTPGEKRDLQLELMLLADVGMLGLPNAGKSTFIRAVSAAKPKVADYPFTTLVPSLGVARVGADRSFVVADIPGLIEGAAEGAGLGIRFLKHLERCRVLIHLVDIMPIDESDPAQNISIIESELYQYSEKLADKPQWLVFNKIDTIGEEEARERAEAIVEEIGWEGDYYLISAATGQNVSALTRDIMDFIEANPRVEEEEKAKEEVAFKWDDYHQQAMQNPITEDDWDDLDDDGWTEEDDEGVEFIYKP.

Residues 1-159 (MKFIDEALIR…RDLQLELMLL (159 aa)) form the Obg domain. Positions 160-333 (ADVGMLGLPN…LTRDIMDFIE (174 aa)) constitute an OBG-type G domain. GTP-binding positions include 166-173 (GLPNAGKS), 191-195 (FTTLV), 213-216 (DIPG), 283-286 (NKID), and 314-316 (SAA). Residues Ser173 and Thr193 each coordinate Mg(2+). The segment at 361–391 (QNPITEDDWDDLDDDGWTEEDDEGVEFIYKP) is disordered. A compositionally biased stretch (acidic residues) spans 365–385 (TEDDWDDLDDDGWTEEDDEGV).

It belongs to the TRAFAC class OBG-HflX-like GTPase superfamily. OBG GTPase family. Monomer. It depends on Mg(2+) as a cofactor.

The protein localises to the cytoplasm. In terms of biological role, an essential GTPase which binds GTP, GDP and possibly (p)ppGpp with moderate affinity, with high nucleotide exchange rates and a fairly low GTP hydrolysis rate. Plays a role in control of the cell cycle, stress response, ribosome biogenesis and in those bacteria that undergo differentiation, in morphogenesis control. This chain is GTPase Obg, found in Glaesserella parasuis serovar 5 (strain SH0165) (Haemophilus parasuis).